The following is a 506-amino-acid chain: Maturase K (506 aa).

This sequence belongs to the intron maturase 2 family. MatK subfamily.

Its subcellular location is the plastid. It localises to the chloroplast. In terms of biological role, usually encoded in the trnK tRNA gene intron. Probably assists in splicing its own and other chloroplast group II introns. This chain is Maturase K, found in Lathyrus sativus (White vetchling).